The following is a 214-amino-acid chain: LexA repressor (214 aa).

Residues 28 to 48 (IRDIQRELSISSTSVVAYNLR) constitute a DNA-binding region (H-T-H motif). Catalysis depends on for autocatalytic cleavage activity residues S133 and K172.

The protein belongs to the peptidase S24 family. Homodimer.

It catalyses the reaction Hydrolysis of Ala-|-Gly bond in repressor LexA.. In terms of biological role, represses a number of genes involved in the response to DNA damage (SOS response), including recA and lexA. In the presence of single-stranded DNA, RecA interacts with LexA causing an autocatalytic cleavage which disrupts the DNA-binding part of LexA, leading to derepression of the SOS regulon and eventually DNA repair. This is LexA repressor from Herpetosiphon aurantiacus (strain ATCC 23779 / DSM 785 / 114-95).